The chain runs to 200 residues: MRIILLGPPGAGKGTQSERIVERYRVPQLSTGDMLRAAVAAGTPVGLEAKSIMESGGLVPDAVVVGIVADRIEEADARDGFILDGFPRTVEQAKALDAMLAEKGIALDAVVEFVVDENALVGRIAKRAEETAARGQPVRKDDTPEVFKTRLDAYKRQTAPLSDYYAGTGLLRKIDGMKPIDEVTGDVTGLLDGFREKATS.

ATP is bound at residue 10-15 (GAGKGT). An NMP region spans residues 30-59 (STGDMLRAAVAAGTPVGLEAKSIMESGGLV). AMP-binding positions include Thr31, Arg36, 57–59 (GLV), 85–88 (GFPR), and Gln92. Residues 126 to 142 (KRAEETAARGQPVRKDD) are LID. Residue Arg127 coordinates ATP. 2 residues coordinate AMP: Arg139 and Arg150. ATP is bound at residue Lys178.

Belongs to the adenylate kinase family. In terms of assembly, monomer.

It is found in the cytoplasm. The enzyme catalyses AMP + ATP = 2 ADP. Its pathway is purine metabolism; AMP biosynthesis via salvage pathway; AMP from ADP: step 1/1. Catalyzes the reversible transfer of the terminal phosphate group between ATP and AMP. Plays an important role in cellular energy homeostasis and in adenine nucleotide metabolism. In Methylorubrum populi (strain ATCC BAA-705 / NCIMB 13946 / BJ001) (Methylobacterium populi), this protein is Adenylate kinase.